Reading from the N-terminus, the 251-residue chain is uncharacterized protein (251 aa).

Positions 1-22 are disordered; sequence MTQLPELGLRSPNNKSPTGPHP.

This is an uncharacterized protein from Homo sapiens (Human).